Reading from the N-terminus, the 556-residue chain is Arginine--tRNA ligase (556 aa).

Residues 132–142 (ANPTGDLHLGH) carry the 'HIGH' region motif.

This sequence belongs to the class-I aminoacyl-tRNA synthetase family. As to quaternary structure, monomer.

It is found in the cytoplasm. It catalyses the reaction tRNA(Arg) + L-arginine + ATP = L-arginyl-tRNA(Arg) + AMP + diphosphate. The protein is Arginine--tRNA ligase of Listeria monocytogenes serotype 4b (strain CLIP80459).